We begin with the raw amino-acid sequence, 666 residues long: Long chain acyl-CoA synthetase 4 (666 aa).

Residue 228–239 participates in ATP binding; sequence IMYTSGTTGDPK. The interval 495–519 is fatty acid-binding; the sequence is DGWLHTGDVGEWQPDGSMKIIDRKK.

Belongs to the ATP-dependent AMP-binding enzyme family. The cofactor is Mg(2+).

It carries out the reaction a long-chain fatty acid + ATP + CoA = a long-chain fatty acyl-CoA + AMP + diphosphate. It functions in the pathway lipid metabolism; fatty acid metabolism. Activation of long-chain fatty acids for both synthesis of cellular lipids, and degradation via beta-oxidation. Preferentially uses palmitate, palmitoleate, oleate and linoleate. The sequence is that of Long chain acyl-CoA synthetase 4 (LACS4) from Arabidopsis thaliana (Mouse-ear cress).